Here is a 230-residue protein sequence, read N- to C-terminus: MAIQHRDPRGGGGSRDARTNRRIKAREVRVIGAEGEQLGVLPIDQALARAQELGMDLVEVSPMAKPPVCKIMDYGRFKYLEKKKQNEAKKKQVVVQLKEVKLRPRTEEHDYDTKIKKVRAFLGEANKARITVMFRGREMSHRELGQKVLQRVIEDLRDVAVIESAPRMEGRQMFMILAPNPKMLQSQRDKAKAAAAAAPAAAPAAGAPAPAPAPAAPAPAPTAADPAAQR.

2 disordered regions span residues 1–21 (MAIQ…RTNR) and 184–230 (LQSQ…AAQR). A compositionally biased stretch (low complexity) spans 193–208 (AAAAAAPAAAPAAGAP). A compositionally biased stretch (pro residues) spans 209–220 (APAPAPAAPAPA). Low complexity predominate over residues 221–230 (PTAADPAAQR).

It belongs to the IF-3 family. Monomer.

The protein localises to the cytoplasm. Functionally, IF-3 binds to the 30S ribosomal subunit and shifts the equilibrium between 70S ribosomes and their 50S and 30S subunits in favor of the free subunits, thus enhancing the availability of 30S subunits on which protein synthesis initiation begins. This chain is Translation initiation factor IF-3, found in Anaeromyxobacter dehalogenans (strain 2CP-1 / ATCC BAA-258).